The sequence spans 178 residues: ATP synthase subunit b (178 aa).

A helical transmembrane segment spans residues 30-50 (FFFVLAIFLIVLAVIGTFVVP).

Belongs to the ATPase B chain family. F-type ATPases have 2 components, F(1) - the catalytic core - and F(0) - the membrane proton channel. F(1) has five subunits: alpha(3), beta(3), gamma(1), delta(1), epsilon(1). F(0) has three main subunits: a(1), b(2) and c(10-14). The alpha and beta chains form an alternating ring which encloses part of the gamma chain. F(1) is attached to F(0) by a central stalk formed by the gamma and epsilon chains, while a peripheral stalk is formed by the delta and b chains.

The protein resides in the cell membrane. F(1)F(0) ATP synthase produces ATP from ADP in the presence of a proton or sodium gradient. F-type ATPases consist of two structural domains, F(1) containing the extramembraneous catalytic core and F(0) containing the membrane proton channel, linked together by a central stalk and a peripheral stalk. During catalysis, ATP synthesis in the catalytic domain of F(1) is coupled via a rotary mechanism of the central stalk subunits to proton translocation. Functionally, component of the F(0) channel, it forms part of the peripheral stalk, linking F(1) to F(0). This chain is ATP synthase subunit b, found in Mycobacterium avium (strain 104).